A 616-amino-acid polypeptide reads, in one-letter code: Adenylosuccinate synthetase 2 (616 aa).

The tract at residues 1-26 (MDKQAERDQSAGPVKTPQETQPPAHN) is disordered. The segment covering 17 to 26 (PQETQPPAHN) has biased composition (polar residues). GTP is bound by residues 87–93 (GDEGKGK) and 117–119 (GHT). Catalysis depends on D88, which acts as the Proton acceptor. Positions 88 and 117 each coordinate Mg(2+). Residues 88–91 (DEGK), 115–118 (NAGH), T202, K216, Q328, T343, and K472 each bind IMP. H118 (proton donor) is an active-site residue. 468 to 474 (AVTKKPR) serves as a coordination point for substrate. GTP is bound by residues R474 and 603–605 (GNG).

It belongs to the adenylosuccinate synthetase family. In terms of assembly, homodimer. The cofactor is Mg(2+).

It localises to the cytoplasm. It catalyses the reaction IMP + L-aspartate + GTP = N(6)-(1,2-dicarboxyethyl)-AMP + GDP + phosphate + 2 H(+). It functions in the pathway purine metabolism; AMP biosynthesis via de novo pathway; AMP from IMP: step 1/2. In terms of biological role, plays an important role in the salvage pathway for purine nucleotide biosynthesis. Catalyzes the first committed step in the biosynthesis of AMP from IMP. The chain is Adenylosuccinate synthetase 2 from Trypanosoma cruzi (strain CL Brener).